The sequence spans 564 residues: Pumilio homolog 9 (564 aa).

A PUM-HD domain is found at 222–564; the sequence is LEDTVLIGQG…KIFSKTILKK (343 aa). Pumilio repeat units lie at residues 249–284, 285–320, 321–359, 361–396, 397–432, 433–469, 470–501, and 502–539; these read EIYG…VILL, AIID…LIVS, VLTS…ALVK, GLKP…FVLE, AATK…RLVA, EISR…VQFR, MHYA…EIVR, and ELLC…KLVA.

It is found in the cytoplasm. Sequence-specific RNA-binding protein that regulates translation and mRNA stability by binding the 3'-UTR of target mRNAs. The polypeptide is Pumilio homolog 9 (APUM9) (Arabidopsis thaliana (Mouse-ear cress)).